Reading from the N-terminus, the 231-residue chain is Floral homeotic protein PMADS 1 (231 aa).

In terms of domain architecture, MADS-box spans 3-58; it reads RGKIQIKRIENQTNRQVTYSKRRNGLFKKANELTVLCDAKVSIIMISSTGKLHEFI. Residues 84 to 174 form the K-box domain; it reads YEKMQEQLRK…LLEFDARQED (91 aa).

As to expression, predominantly expressed in petals and stamens, less in carpels and sepals.

The protein resides in the nucleus. Transcription factor involved in the genetic control of flower development. Necessary for the normal development of petals. Absence of the PMADS1 protein causes transformation of petals into sepals. The polypeptide is Floral homeotic protein PMADS 1 (PMADS1) (Petunia hybrida (Petunia)).